The primary structure comprises 130 residues: Large ribosomal subunit protein bL17 (130 aa).

The protein belongs to the bacterial ribosomal protein bL17 family. As to quaternary structure, part of the 50S ribosomal subunit. Contacts protein L32.

This Nitrosomonas eutropha (strain DSM 101675 / C91 / Nm57) protein is Large ribosomal subunit protein bL17.